The following is a 209-amino-acid chain: Vacuolar protein sorting-associated protein 28 homolog 1 (209 aa).

The 99-residue stretch at 1 to 99 folds into the VPS28 N-terminal domain; that stretch reads MEVKLWNDKR…TSGVPATVEH (99 aa). The VPS28 C-terminal domain maps to 109 to 205; it reads SSASVVAECV…SYNSFMAALP (97 aa).

It belongs to the VPS28 family. Component of the endosomal sorting required for transport complex I (ESCRT-I), composed of ELC, VPS28 and VPS37. Interacts with ELC.

It localises to the endosome. In terms of biological role, component of the ESCRT-I complex (endosomal sorting complex required for transport I), a regulator of vesicular trafficking process. Required for the sorting of endocytic ubiquitinated cargos into multivesicular bodies (MVBs). Mediates the association to the ESCRT-0 complex. The protein is Vacuolar protein sorting-associated protein 28 homolog 1 (VPS28-1) of Arabidopsis thaliana (Mouse-ear cress).